The following is a 475-amino-acid chain: FAD-dependent monooxygenase spyC (475 aa).

The signal sequence occupies residues 1 to 24 (MTAKPPFKVIIVGGSIAGLTLAHC). Residues glutamate 36, glycine 50, arginine 109, aspartate 310, and alanine 323 each contribute to the FAD site. Residues 444 to 464 (LLIPFLYPVVAFSLCVLAWIG) traverse the membrane as a helical segment.

Belongs to the paxM FAD-dependent monooxygenase family. It depends on FAD as a cofactor.

The protein resides in the membrane. The enzyme catalyses (2E,6E,10E)-geranylgeranyl-triacetate lactone + AH2 + O2 = (S)-(2E,6E,10E)-epoxygeranylgeranyl-triacetate lactone + A + H2O. Its pathway is secondary metabolite biosynthesis; terpenoid biosynthesis. Functionally, FAD-dependent monooxygenase spyC; part of the gene cluster that mediates the biosynthesis of meroterpenoids called sartorypyrones. Within the pathway, spyC catalyzes the epoxidation of geranylgeranyl-triacetate lactone at the terminal olein to yield epoxygeranylgeranyl-triacetate lactone. The biosynthesis of sartorypyrones begins with the production of triacetic acid lactone (TAL) by the NR-PKS spyA using one molecule of acetyl-CoA and two molecules of malonyl-CoA. The prenyltransferase spyF then conjugates geranylgeranyl pyrophosphate (GGPP) to TAL to form geranylgeranyl-triacetate lactone, for which the pathway-specific geranylgeranyl pyrophosphate synthase (GGPS) spyE is required to provide GGPP. Subsequently, geranylgeranyl-triacetate lactone is epoxidized at the terminal olein by the FAD-dependent monooxygenase spyC, followed by cyclization of the terpenoid component catalyzed by the terpene cyclase spyD to produce both the bicyclic sartorypyrone F and the monocyclic sartorypyrone D. Finally, the last step of the biosynthesis involves the acetylation of the meroterpenoids sartorypyrones D and F by the acetyltransferase SpyB to produce sartorypyrones A and G, respectively. The sequence is that of FAD-dependent monooxygenase spyC from Aspergillus fumigatus (strain ATCC MYA-4609 / CBS 101355 / FGSC A1100 / Af293) (Neosartorya fumigata).